The sequence spans 376 residues: NifS-like protein (376 aa).

Pyridoxal 5'-phosphate is bound by residues 58–59 (SE) and 184–186 (SLN).

It belongs to the class-V pyridoxal-phosphate-dependent aminotransferase family. NifS/IscS subfamily. Requires pyridoxal 5'-phosphate as cofactor.

The protein localises to the virion. In African swine fever virus (isolate Tick/Malawi/Lil 20-1/1983) (ASFV), this protein is NifS-like protein.